The chain runs to 404 residues: Multidrug resistance protein MdtG (404 aa).

The next 11 helical transmembrane spans lie at leucine 19–valine 39, leucine 56–alanine 76, leucine 90–isoleucine 110, alanine 113–valine 133, threonine 144–alanine 164, proline 171–isoleucine 191, leucine 222–leucine 242, isoleucine 254–proline 274, isoleucine 288–threonine 308, phenylalanine 317–asparagine 337, and alanine 376–leucine 396.

Belongs to the major facilitator superfamily. DHA1 family. MdtG (TC 2.A.1.2.20) subfamily.

It localises to the cell inner membrane. The protein is Multidrug resistance protein MdtG of Salmonella arizonae (strain ATCC BAA-731 / CDC346-86 / RSK2980).